We begin with the raw amino-acid sequence, 1556 residues long: Ubiquitin carboxyl-terminal hydrolase 47 (1556 aa).

The interval 117-231 (MKSDGEKAKS…AKKTAKVTSK (115 aa)) is disordered. The span at 146-156 (ASGSSSPSKAK) shows a compositional bias: low complexity. Residues Ser-172 and Ser-173 each carry the phosphoserine modification. A compositionally biased stretch (low complexity) spans 180-189 (IKTTAAKISK). Residues 191 to 200 (GSEKAPRASP) are compositionally biased toward basic and acidic residues. Over residues 208-219 (TEINSKNTSSES) the composition is skewed to polar residues. At Ser-238 the chain carries Phosphoserine. A USP domain is found at 396-779 (VGLVNQAMTC…NAYMLMYRQV (384 aa)). Cys-405 functions as the Nucleophile in the catalytic mechanism. Composition is skewed to polar residues over residues 628–642 (NRSGNSGEQNSQLNG) and 661–673 (LSSGVVTTASSSQ). The tract at residues 628–697 (NRSGNSGEQN…SSSTSKSAKQ (70 aa)) is disordered. Residues 688–697 (SSSTSKSAKQ) show a composition bias toward low complexity. The active-site Proton acceptor is the His-720. Residues 1087-1148 (EPMSQPSPSH…LSSPEDEAAS (62 aa)) are disordered. Basic and acidic residues predominate over residues 1109-1125 (DGDRTLVETDNMAHRGG). The segment covering 1128 to 1141 (SQVSSTSHSPQLSS) has biased composition (low complexity). Residues Ser-1131, Ser-1132, Ser-1140, Ser-1141, Ser-1199, Ser-1201, and Ser-1205 each carry the phosphoserine modification.

This sequence belongs to the peptidase C19 family. Interacts with ttk.

The protein resides in the nucleus. The catalysed reaction is Thiol-dependent hydrolysis of ester, thioester, amide, peptide and isopeptide bonds formed by the C-terminal Gly of ubiquitin (a 76-residue protein attached to proteins as an intracellular targeting signal).. In terms of biological role, ubiquitin-specific protease that deubiquitinates target proteins to regulate different cellular and developmental pathways. Functions downstream of Dsor1/MEK to positively regulate the Ras/MAPK signaling pathway. Likely to modulate the pathway during various cellular and developmental processes including rl/MAPK activation by the receptors InR, Egfr and sevenless/sev. Functions in the post-translational stabilization of rl/MAPK levels in a mechanism that is independent of rl activity and opposes the activity of the E2 enzyme Unc6 and the putative E3 ligases poe, Ufd4 and Kcmf1, which mediate the ubiquitination and proteasomal degradation of rl. During eye development it may also act downstream of rl/MAPK to negatively regulate the Ras/MAPK signaling pathway by stabilizing the transcriptional repressor ttk and consequently inhibiting photoreceptor cell development. This suggests that at least during eye development, it may act in both the positive and negative regulation of the Ras/MAPK signaling pathway to mediate the development of different cell types. Positively regulates border follicle cell migration during oogenesis by mediating the deubiquitination and stabilization of slbo. In the wing disks it positively regulates wg signaling by stabilizing arm. Has an effect on position-effect variegation. The chain is Ubiquitin carboxyl-terminal hydrolase 47 from Drosophila melanogaster (Fruit fly).